The following is a 798-amino-acid chain: Integrin beta-1 (798 aa).

The first 20 residues, 1–20, serve as a signal peptide directing secretion; sequence MNLQLIFWIGLISSVCCVFG. Topologically, residues 21 to 728 are extracellular; that stretch reads QADENRCLKA…ETPECPTGPD (708 aa). One can recognise a PSI domain in the interval 26–76; the sequence is RCLKANAKSCGECIQAGPNCGWCTNSTFLQEGMPTSARCDDLEALKKKGCH. 28 disulfides stabilise this stretch: Cys-27–Cys-45, Cys-35–Cys-464, Cys-38–Cys-64, Cys-48–Cys-75, Cys-207–Cys-213, Cys-261–Cys-301, Cys-401–Cys-415, Cys-435–Cys-462, Cys-466–Cys-486, Cys-477–Cys-489, Cys-491–Cys-500, Cys-502–Cys-533, Cys-516–Cys-531, Cys-525–Cys-536, Cys-538–Cys-553, Cys-555–Cys-576, Cys-560–Cys-574, Cys-568–Cys-579, Cys-581–Cys-590, Cys-592–Cys-615, Cys-599–Cys-613, Cys-607–Cys-618, Cys-620–Cys-630, Cys-633–Cys-636, Cys-640–Cys-691, Cys-646–Cys-665, Cys-649–Cys-661, and Cys-699–Cys-723. Residue Asn-50 is glycosylated (N-linked (GlcNAc...) asparagine). Residues 75 to 91 are compositionally biased toward basic and acidic residues; the sequence is CHPNDIENPRGSKDIKK. Residues 75-105 form a disordered region; it reads CHPNDIENPRGSKDIKKNKNVTNRSKGTAEK. 2 N-linked (GlcNAc...) asparagine glycosylation sites follow: Asn-94 and Asn-97. The region spanning 140–378 is the VWFA domain; sequence DYPIDLYYLM…QLIIDAYNSL (239 aa). Ser-152 and Ser-154 together coordinate Mg(2+). Ca(2+)-binding residues include Ser-154, Asp-157, Asp-158, and Glu-189. The segment at 207-213 is CX3CL1-binding; it reads CTNEQNC. A glycan (N-linked (GlcNAc...) asparagine) is linked at Asn-212. Ca(2+)-binding residues include Asn-244, Asp-246, Pro-248, and Glu-249. Glu-249 provides a ligand contact to Mg(2+). Asn-269 is a glycosylation site (N-linked (GlcNAc...) asparagine). Residues 295–314 are CX3CL1-binding; it reads LPNDGQCHLENDVYTMSHYY. Ala-362 is a Ca(2+) binding site. N-linked (GlcNAc...) asparagine glycosylation is found at Asn-363, Asn-406, and Asn-417. Residues 383–465 are interaction with TMEM182; that stretch reads ILENSKLPEG…IILQFICECE (83 aa). I-EGF domains are found at residues 466–501, 502–554, 555–591, and 592–631; these read CQGE…RHCE, CSTD…KFCE, CDNF…SACD, and CSLD…PTCE. Residue Asn-481 is glycosylated (N-linked (GlcNAc...) asparagine). N-linked (GlcNAc...) asparagine glycosylation occurs at Asn-520. Asn-584 carries an N-linked (GlcNAc...) asparagine glycan. A glycan (N-linked (GlcNAc...) asparagine) is linked at Asn-669. Residues 729–749 traverse the membrane as a helical segment; the sequence is IIPIVAGVVAGIVLIGLALLL. Topologically, residues 750-798 are cytoplasmic; the sequence is IWKLLMIIHDRREFAKFEKEKMNAKWDTGENPIYKSAVTTVVNPKYEGK. The signal for sorting from recycling endosomes; interaction with ACAP1 stretch occupies residues 762 to 767; it reads EFAKFE. Position 777 is a phosphothreonine (Thr-777). The residue at position 783 (Tyr-783) is a Phosphotyrosine. Phosphoserine is present on Ser-785. Residues 785–792 are interaction with ITGB1BP1; sequence SAVTTVVN. Thr-789 carries the post-translational modification Phosphothreonine. Position 794 is an N6-acetyllysine; alternate (Lys-794). Lys-794 participates in a covalent cross-link: Glycyl lysine isopeptide (Lys-Gly) (interchain with G-Cter in SUMO1); alternate.

It belongs to the integrin beta chain family. Interacts with seprase FAP (seprase); the interaction occurs at the cell surface of invadopodia membrane in a collagen-dependent manner. Heterodimer of an alpha and a beta subunit. Beta-1 associates with either alpha-1, alpha-2, alpha-3, alpha-4, alpha-5, alpha-6, alpha-7, alpha-8, alpha-9, alpha-10, alpha-11 or alpha-V. ITGA6:ITGB1 is found in a complex with CD9; interaction takes place in oocytes and is involved in sperm-egg fusion. Binds LGALS3BP and NMRK2, when associated with alpha-7, but not with alpha-5. Interacts with FLNB, FLNC and RANBP9. Interacts with KRT1 in the presence of RACK1 and SRC. Interacts with JAML; integrin alpha-4/beta-1 may regulate leukocyte to endothelial cells adhesion by controlling JAML homodimerization. Interacts with RAB21. Interacts (via the cytoplasmic region) with RAB25 (via the hypervariable C-terminal region). Interacts with MYO10. Interacts with ITGB1BP1 (via C-terminal region); the interaction is a prerequisite for focal adhesion disassembly. Interacts with TLN1; the interaction is prevented by competitive binding of ITGB1BP1. Interacts with ACAP1; required for ITGB1 recycling. Interacts with ASAP3. Interacts with FERMT2; the interaction is inhibited in presence of ITGB1BP1. Interacts with DAB2. Interacts with FGR and HCK. Interacts with EMP2; the interaction may be direct or indirect and ITGB1 has a heterodimer form. ITGA5:ITGB1 interacts with CCN3. ITGA4:ITGB1 is found in a ternary complex with CX3CR1 and CX3CL1. ITGA5:ITGB1 interacts with FBN1. ITGA5:ITGB1 interacts with IL1B. Interacts with MDK. ITGA4:ITGB1 interacts with MDK; this interaction mediates MDK-induced osteoblast cells migration through PXN phosphorylation. ITGA6:ITGB1 interacts with MDK; this interaction mediates MDK-induced neurite-outgrowth. ITGA5:ITGB1 interacts with ACE2. Interacts with TMEM182 and LAMB1. Interacts with tensin TNS3; TNS3 also interacts with PEAK1, thus acting as an adapter molecule to bridge the association of PEAK1 with ITGB1. Interacts with tensin TNS4; the interaction displaces tensin TNS3 from the ITGB1 cytoplasmic tail and promotes ITGB1 stability. Integrin ITGA9:ITGB1 interacts with SPP1/OPN (via N-terminus). Integrin ITGA9:ITGB1 interacts with TNC/TNFN3 (via the 3rd Fibronectin type-III domain). Integrins ITGA4:ITGB1 and ITGA9:ITGB1 interact with SVEP1 (via Sushi domain 21); thereby inhibit Ca(2+) intracellular signaling and as a result repress vasocontraction. ITGA4:ITGB1 and ITGA5:ITGB1 interacts with SELP. Interacts with CD248. ITGA5:ITGB1 interacts with IGFBP1. ITGA4:ITGB1 interacts with BCAM. Interacts with ADGRG6. In terms of assembly, interacts with the C-terminal region of FLNC. Interacts with filamin FLNA isoform 3/VAR-1. As to quaternary structure, interacts with ACE2. Interacts with alpha-7B in cardiomyocytes of adult heart and alpha-7A and alpha-7B in adult skeletal muscle. Interacts with filamin FLNA isoform 3/VAR-1.

It localises to the cell membrane. The protein resides in the cell projection. Its subcellular location is the invadopodium membrane. It is found in the ruffle membrane. The protein localises to the recycling endosome. It localises to the melanosome. The protein resides in the lamellipodium. Its subcellular location is the ruffle. It is found in the cell junction. The protein localises to the focal adhesion. It localises to the sarcolemma. Its function is as follows. Integrins alpha-1/beta-1, alpha-2/beta-1, alpha-10/beta-1 and alpha-11/beta-1 are receptors for collagen. Integrins alpha-1/beta-1 and alpha-2/beta-2 recognize the proline-hydroxylated sequence G-F-P-G-E-R in collagen. Integrins alpha-2/beta-1, alpha-3/beta-1, alpha-4/beta-1, alpha-5/beta-1, alpha-8/beta-1, alpha-10/beta-1, alpha-11/beta-1 and alpha-V/beta-1 are receptors for fibronectin. Alpha-4/beta-1 recognizes one or more domains within the alternatively spliced CS-1 and CS-5 regions of fibronectin. Integrin alpha-5/beta-1 is a receptor for fibrinogen. Integrin alpha-1/beta-1, alpha-2/beta-1, alpha-6/beta-1 and alpha-7/beta-1 are receptors for lamimin. Integrin alpha-6/beta-1 (ITGA6:ITGB1) is present in oocytes and is involved in sperm-egg fusion. Integrin alpha-4/beta-1 is a receptor for VCAM1 and recognizes the sequence Q-I-D-S in VCAM1. Integrin alpha-9/beta-1 is a receptor for VCAM1, cytotactin and osteopontin. It recognizes the sequence A-E-I-D-G-I-E-L in cytotactin. Integrin alpha-3/beta-1 is a receptor for epiligrin, thrombospondin and CSPG4. Integrin alpha-3/beta-1 provides a docking site for FAP (seprase) at invadopodia plasma membranes in a collagen-dependent manner and hence may participate in the adhesion, formation of invadopodia and matrix degradation processes, promoting cell invasion. Alpha-3/beta-1 may mediate with LGALS3 the stimulation by CSPG4 of endothelial cells migration. Integrin alpha-V/beta-1 is a receptor for vitronectin. Beta-1 integrins recognize the sequence R-G-D in a wide array of ligands. When associated with alpha-7/beta-1 integrin, regulates cell adhesion and laminin matrix deposition. Involved in promoting endothelial cell motility and angiogenesis. Involved in osteoblast compaction through the fibronectin fibrillogenesis cell-mediated matrix assembly process and the formation of mineralized bone nodules. May be involved in up-regulation of the activity of kinases such as PKC via binding to KRT1. Together with KRT1 and RACK1, serves as a platform for SRC activation or inactivation. Plays a mechanistic adhesive role during telophase, required for the successful completion of cytokinesis. ITGA4:ITGB1 binds to fractalkine (CX3CL1) and may act as its coreceptor in CX3CR1-dependent fractalkine signaling. ITGA4:ITGB1 and ITGA5:ITGB1 bind to PLA2G2A via a site (site 2) which is distinct from the classical ligand-binding site (site 1) and this induces integrin conformational changes and enhanced ligand binding to site 1. ITGA5:ITGB1 acts as a receptor for fibrillin-1 (FBN1) and mediates R-G-D-dependent cell adhesion to FBN1. ITGA5:ITGB1 acts as a receptor for fibronectin FN1 and mediates R-G-D-dependent cell adhesion to FN1. ITGA5:ITGB1 is a receptor for IL1B and binding is essential for IL1B signaling. ITGA5:ITGB3 is a receptor for soluble CD40LG and is required for CD40/CD40LG signaling. Plays an important role in myoblast differentiation and fusion during skeletal myogenesis. ITGA9:ITGB1 may play a crucial role in SVEP1/polydom-mediated myoblast cell adhesion. Integrins ITGA9:ITGB1 and ITGA4:ITGB1 repress PRKCA-mediated L-type voltage-gated channel Ca(2+) influx and ROCK-mediated calcium sensitivity in vascular smooth muscle cells via their interaction with SVEP1, thereby inhibit vasocontraction. This Bos taurus (Bovine) protein is Integrin beta-1 (ITGB1).